A 131-amino-acid polypeptide reads, in one-letter code: Fumarate reductase subunit C (131 aa).

The next 3 helical transmembrane spans lie at glutamate 30–leucine 50, phenylalanine 63–histidine 83, and isoleucine 109–leucine 129.

It belongs to the FrdC family. In terms of assembly, part of an enzyme complex containing four subunits: a flavoprotein (FrdA), an iron-sulfur protein (FrdB), and two hydrophobic anchor proteins (FrdC and FrdD).

The protein localises to the cell inner membrane. In terms of biological role, two distinct, membrane-bound, FAD-containing enzymes are responsible for the catalysis of fumarate and succinate interconversion; fumarate reductase is used in anaerobic growth, and succinate dehydrogenase is used in aerobic growth. Anchors the catalytic components of the fumarate reductase complex to the cell inner membrane, binds quinones. The protein is Fumarate reductase subunit C of Escherichia coli O17:K52:H18 (strain UMN026 / ExPEC).